We begin with the raw amino-acid sequence, 340 residues long: MLHTIGILIWIIIKIIVIVVPLLISVAYLTYAERKVIGYIQVRIGPNRVGLKGLLQPFADLLKLITKEIIVPTRSNKYLFVIAPLFALVPSLVGWAVIPFQEGVVLANINAGVLYLFAMSSLGVYGVLIAGWASNSKYAMFGALRSTAQTVSYEIAMGFALVGVLLAAGSMNLTDIVNSQKGGMLHWWFIPLLPLFLVFWISGIAETNRAPFDLAEGESEIVAGFHVEYSGIGFALFFLSEYASMILISTVLAILFMGGWLSPFEGITFLDQIFFIVPGFVWLLLKISFFLFVYLWVRATFPRYRYDQLMRLGWKVLIPVTIVWLIVTAVMVVAHVKPWF.

A run of 8 helical transmembrane segments spans residues 4-24 (TIGI…PLLI), 78-98 (YLFV…WAVI), 113-133 (VLYL…AGWA), 151-171 (VSYE…AGSM), 184-204 (MLHW…ISGI), 244-264 (SMIL…LSPF), 273-293 (IFFI…FLFV), and 316-336 (VLIP…VAHV).

It belongs to the complex I subunit 1 family. NDH-1 is composed of 14 different subunits. Subunits NuoA, H, J, K, L, M, N constitute the membrane sector of the complex.

It is found in the cell inner membrane. The enzyme catalyses a quinone + NADH + 5 H(+)(in) = a quinol + NAD(+) + 4 H(+)(out). In terms of biological role, NDH-1 shuttles electrons from NADH, via FMN and iron-sulfur (Fe-S) centers, to quinones in the respiratory chain. The immediate electron acceptor for the enzyme in this species is believed to be ubiquinone. Couples the redox reaction to proton translocation (for every two electrons transferred, four hydrogen ions are translocated across the cytoplasmic membrane), and thus conserves the redox energy in a proton gradient. This subunit may bind ubiquinone. This chain is NADH-quinone oxidoreductase subunit H, found in Legionella pneumophila (strain Lens).